A 116-amino-acid polypeptide reads, in one-letter code: Protein RALF-like 33 (116 aa).

The N-terminal stretch at 1–23 (MRGLSTKPVAIIIAILTVHFLFA) is a signal peptide. A propeptide spans 24 to 67 (AVTSQSSGDFVPIESKCNGTIAECSLSTAEEEFEMDSEINRRIL) (removed in mature form). The N-linked (GlcNAc...) asparagine glycan is linked to Asn-41. Disulfide bonds link Cys-85–Cys-95 and Cys-108–Cys-114.

This sequence belongs to the plant rapid alkalinization factor (RALF) family. Post-translationally, proteolytically cleaved, probably by S1P, a subtilisin-like serine protease (subtilase). Expressed in roots, stems, leaves and plants.

Its subcellular location is the secreted. Its function is as follows. Cell signaling peptide that may regulate plant stress, growth, and development. Mediates a rapid alkalinization of extracellular space by mediating a transient increase in the cytoplasmic Ca(2+) concentration leading to a calcium-dependent signaling events through a cell surface receptor and a concomitant activation of some intracellular mitogen-activated protein kinases. The polypeptide is Protein RALF-like 33 (RALFL33) (Arabidopsis thaliana (Mouse-ear cress)).